The chain runs to 333 residues: L-lactate dehydrogenase B chain (333 aa).

NAD(+) is bound by residues 29-57 and arginine 99; that span reads GQVGMACAVSILMRELADELALVDVIEDK. The substrate site is built by arginine 106, asparagine 138, and arginine 169. An NAD(+)-binding site is contributed by asparagine 138. The active-site Proton acceptor is the histidine 193. Threonine 248 is a substrate binding site.

The protein belongs to the LDH/MDH superfamily. LDH family. In terms of assembly, homotetramer.

It localises to the cytoplasm. It carries out the reaction (S)-lactate + NAD(+) = pyruvate + NADH + H(+). The protein operates within fermentation; pyruvate fermentation to lactate; (S)-lactate from pyruvate: step 1/1. Its function is as follows. Interconverts simultaneously and stereospecifically pyruvate and lactate with concomitant interconversion of NADH and NAD(+). In Anguilla rostrata (American eel), this protein is L-lactate dehydrogenase B chain (ldhb).